The following is a 614-amino-acid chain: FAD-linked oxidoreductase ffsJ (614 aa).

An N-terminal signal peptide occupies residues 1–19 (MRLTRALTPAILALPAAHA). N-linked (GlcNAc...) asparagine glycosylation is found at Asn-30, Asn-53, Asn-72, and Asn-114. The FAD-binding PCMH-type domain maps to 119–301 (TGSLPAYYID…LSSTHRVEPE (183 aa)). Asn-314, Asn-329, Asn-461, Asn-465, Asn-478, and Asn-514 each carry an N-linked (GlcNAc...) asparagine glycan. Residues 453–495 (NGHGRSNNNNSNNSSTSTSTSTSSKNGSVKPYAYGGKETTSST) form a disordered region. Positions 456–480 (GRSNNNNSNNSSTSTSTSTSSKNGS) are enriched in low complexity.

This sequence belongs to the oxygen-dependent FAD-linked oxidoreductase family. FAD serves as cofactor.

It functions in the pathway mycotoxin biosynthesis. Its function is as follows. FAD-linked oxidoreductase; part of the gene cluster that mediates the biosynthesis of the cytotoxic leucine-containing cytochalasans, including aspochalasin C, aspochalasin E, TMC-169, flavichalasine F, aspergillin PZ, aspochalasin M and flavichalasine G. The first step in the pathway is catalyzed by the hybrid PKS-NRPS ffsA that utilizes 8 units of malonyl-CoA to iteratively assemble the octaketide chain before addition of L-leucine by the C-terminal NRPS modules. Because ffsA lacks a designated enoylreductase (ER) domain, the required activity is provided the enoyl reductase fssC. The methyltransferase (MT) domain of ffsA catalyzes the alpha-methylation at C10 and C14 using S-adenosyl-L-methionine as the methyl-donating cosubstrate. Reduction by the hydrolyase ffsE, followed by dehydration and intra-molecular Diels-Alder cyclization by the Diels-Alderase ffsF then yield the required isoindolone-fused macrocycle. A number of oxidative steps catalyzed by the tailoring cytochrome P450 monooxygenase ffsD, the FAD-linked oxidoreductase ffsJ and the short-chain dehydrogenase/reductase ffsI, are further required to afford the final products. The polypeptide is FAD-linked oxidoreductase ffsJ (Aspergillus flavipes).